A 432-amino-acid polypeptide reads, in one-letter code: Glutamate-1-semialdehyde 2,1-aminomutase (432 aa).

An N6-(pyridoxal phosphate)lysine modification is found at K269.

It belongs to the class-III pyridoxal-phosphate-dependent aminotransferase family. HemL subfamily. In terms of assembly, homodimer. It depends on pyridoxal 5'-phosphate as a cofactor.

Its subcellular location is the cytoplasm. It catalyses the reaction (S)-4-amino-5-oxopentanoate = 5-aminolevulinate. It functions in the pathway porphyrin-containing compound metabolism; protoporphyrin-IX biosynthesis; 5-aminolevulinate from L-glutamyl-tRNA(Glu): step 2/2. The chain is Glutamate-1-semialdehyde 2,1-aminomutase from Desulforudis audaxviator (strain MP104C).